Reading from the N-terminus, the 323-residue chain is Penicillopepsin-1 (323 aa).

An O-linked (Man...) serine glycan is attached at Ser-3. Thr-7 carries an O-linked (Man...) threonine glycan. The region spanning 17-320 is the Peptidase A1 domain; it reads YITPVTIGGT…DSDGPQLGFA (304 aa). Residues Asp-33 and Asp-213 contribute to the active site. Cys-249 and Cys-283 are disulfide-bonded.

It belongs to the peptidase A1 family. Monomer.

Its subcellular location is the secreted. It catalyses the reaction Hydrolysis of proteins with broad specificity similar to that of pepsin A, preferring hydrophobic residues at P1 and P1', but also cleaving 20-Gly-|-Glu-21 in the B chain of insulin. Clots milk, and activates trypsinogen.. Secreted aspartic endopeptidase that allows assimilation of proteinaceous substrates. The scissile peptide bond is attacked by a nucleophilic water molecule activated by two aspartic residues in the active site. Shows a broad primary substrate specificity. Favors hydrophobic residues at the P1 and P1' positions, but can also activate trypsinogen and hydrolyze the B chain of insulin between positions 'Gly-20' and 'Glu-21'. The chain is Penicillopepsin-1 from Penicillium janthinellum (Penicillium vitale).